We begin with the raw amino-acid sequence, 321 residues long: Methenyltetrahydromethanopterin cyclohydrolase (321 aa).

Belongs to the MCH family.

The protein resides in the cytoplasm. It catalyses the reaction 5,10-methenyl-5,6,7,8-tetrahydromethanopterin + H2O = N(5)-formyl-5,6,7,8-tetrahydromethanopterin + H(+). Its pathway is one-carbon metabolism; methanogenesis from CO(2); 5,10-methenyl-5,6,7,8-tetrahydromethanopterin from CO(2): step 3/3. In terms of biological role, catalyzes the reversible interconversion of 5-formyl-H(4)MPT to methenyl-H(4)MPT(+). The chain is Methenyltetrahydromethanopterin cyclohydrolase from Methanosarcina mazei (strain ATCC BAA-159 / DSM 3647 / Goe1 / Go1 / JCM 11833 / OCM 88) (Methanosarcina frisia).